We begin with the raw amino-acid sequence, 479 residues long: Monodehydroascorbate reductase 1, peroxisomal (479 aa).

The Cytoplasmic segment spans residues 1 to 3 (MGR). The chain crosses the membrane as a helical span at residues 4 to 24 (AFEYVILGGGVAAGYAALEFV). Residues 12–15 (GGVA), glutamate 41, arginine 48, lysine 53, and 147–148 (RN) each bind FAD. The Peroxisomal segment spans residues 25 to 445 (RRNGGASSQE…QATGGGGKPT (421 aa)). Residues 172–178 (GGYIGME), arginine 202, and glycine 260 contribute to the NAD(+) site. NADP(+)-binding positions include 174–178 (YIGME), arginine 202, and glycine 260. An FAD-binding site is contributed by aspartate 297. 314–315 (EH) provides a ligand contact to NAD(+). Residue 314 to 315 (EH) participates in NADP(+) binding. An FAD-binding site is contributed by valine 316. Residue arginine 320 participates in L-ascorbate binding. Residue tyrosine 347 participates in FAD binding. Tyrosine 347 lines the NAD(+) pocket. Tyrosine 347 provides a ligand contact to NADP(+). Residue arginine 349 participates in L-ascorbate binding. A helical membrane pass occupies residues 446 to 466 (CAWHATVGVAAAVSIAAFACW). Topologically, residues 467-479 (YGWQAPYVLKRDF) are cytoplasmic.

It belongs to the FAD-dependent oxidoreductase family. Requires FAD as cofactor.

It localises to the peroxisome membrane. It carries out the reaction 2 monodehydro-L-ascorbate radical + NADH + H(+) = 2 L-ascorbate + NAD(+). In terms of biological role, catalyzes the conversion of monodehydroascorbate to ascorbate, oxidizing NADH in the process. Ascorbate is a major antioxidant against reactive oxygen species (ROS) and nitric oxide (NO). The chain is Monodehydroascorbate reductase 1, peroxisomal from Oryza sativa subsp. japonica (Rice).